Reading from the N-terminus, the 454-residue chain is Putative flavin-containing monoamine oxidase AofH (454 aa).

The protein belongs to the flavin monoamine oxidase family. FAD is required as a cofactor.

This chain is Putative flavin-containing monoamine oxidase AofH (aofH), found in Mycobacterium tuberculosis (strain CDC 1551 / Oshkosh).